The following is a 190-amino-acid chain: Probable E3 ubiquitin-protein ligase RHB1A (190 aa).

The RING-type; atypical zinc-finger motif lies at 139–180; sequence CPICFEDYDVENPRLTTKCEHEFHLSCLLEWIERSDRCPICD.

It catalyses the reaction S-ubiquitinyl-[E2 ubiquitin-conjugating enzyme]-L-cysteine + [acceptor protein]-L-lysine = [E2 ubiquitin-conjugating enzyme]-L-cysteine + N(6)-ubiquitinyl-[acceptor protein]-L-lysine.. It participates in protein modification; protein ubiquitination. Its function is as follows. Probable E3 ubiquitin-protein ligase that may possess E3 ubiquitin ligase activity in vitro. The protein is Probable E3 ubiquitin-protein ligase RHB1A of Arabidopsis thaliana (Mouse-ear cress).